The following is a 381-amino-acid chain: Cobalt-precorrin-5B C(1)-methyltransferase (381 aa).

This sequence belongs to the CbiD family.

It catalyses the reaction Co-precorrin-5B + S-adenosyl-L-methionine = Co-precorrin-6A + S-adenosyl-L-homocysteine. It functions in the pathway cofactor biosynthesis; adenosylcobalamin biosynthesis; cob(II)yrinate a,c-diamide from sirohydrochlorin (anaerobic route): step 6/10. Its function is as follows. Catalyzes the methylation of C-1 in cobalt-precorrin-5B to form cobalt-precorrin-6A. The chain is Cobalt-precorrin-5B C(1)-methyltransferase from Prochlorococcus marinus (strain NATL1A).